Reading from the N-terminus, the 363-residue chain is Anhydro-N-acetylmuramic acid kinase (363 aa).

10–17 (GTSLDGMD) serves as a coordination point for ATP.

It belongs to the anhydro-N-acetylmuramic acid kinase family.

The catalysed reaction is 1,6-anhydro-N-acetyl-beta-muramate + ATP + H2O = N-acetyl-D-muramate 6-phosphate + ADP + H(+). It functions in the pathway amino-sugar metabolism; 1,6-anhydro-N-acetylmuramate degradation. It participates in cell wall biogenesis; peptidoglycan recycling. Its function is as follows. Catalyzes the specific phosphorylation of 1,6-anhydro-N-acetylmuramic acid (anhMurNAc) with the simultaneous cleavage of the 1,6-anhydro ring, generating MurNAc-6-P. Is required for the utilization of anhMurNAc either imported from the medium or derived from its own cell wall murein, and thus plays a role in cell wall recycling. Contributes to intrinsic fosfomycin resistance in P.aeruginosa. This Pseudomonas aeruginosa (strain ATCC 15692 / DSM 22644 / CIP 104116 / JCM 14847 / LMG 12228 / 1C / PRS 101 / PAO1) protein is Anhydro-N-acetylmuramic acid kinase.